A 72-amino-acid chain; its full sequence is MAKEDVIEIEGKVVETMPNAMFTVELENGHQILATVSGKIRKNYIRILVGDKVTVEMSPYDLTRGRITYRFK.

In terms of domain architecture, S1-like spans Met1–Lys72.

It belongs to the IF-1 family. As to quaternary structure, component of the 30S ribosomal translation pre-initiation complex which assembles on the 30S ribosome in the order IF-2 and IF-3, IF-1 and N-formylmethionyl-tRNA(fMet); mRNA recruitment can occur at any time during PIC assembly.

It localises to the cytoplasm. One of the essential components for the initiation of protein synthesis. Stabilizes the binding of IF-2 and IF-3 on the 30S subunit to which N-formylmethionyl-tRNA(fMet) subsequently binds. Helps modulate mRNA selection, yielding the 30S pre-initiation complex (PIC). Upon addition of the 50S ribosomal subunit IF-1, IF-2 and IF-3 are released leaving the mature 70S translation initiation complex. This is Translation initiation factor IF-1 from Streptococcus mutans serotype c (strain ATCC 700610 / UA159).